The primary structure comprises 385 residues: 1-deoxy-D-xylulose 5-phosphate reductoisomerase (385 aa).

Residues Thr10, Gly11, Ser12, Ile13, Gly36, Asn38, and Asn122 each contribute to the NADPH site. Residue Lys123 coordinates 1-deoxy-D-xylulose 5-phosphate. Glu124 is an NADPH binding site. Asp148 is a Mn(2+) binding site. 1-deoxy-D-xylulose 5-phosphate-binding residues include Ser149, Glu150, Ser174, and His197. Residue Glu150 participates in Mn(2+) binding. Gly203 contributes to the NADPH binding site. 4 residues coordinate 1-deoxy-D-xylulose 5-phosphate: Ser210, Asn215, Lys216, and Glu219. Mn(2+) is bound at residue Glu219.

Belongs to the DXR family. It depends on Mg(2+) as a cofactor. Mn(2+) serves as cofactor.

It catalyses the reaction 2-C-methyl-D-erythritol 4-phosphate + NADP(+) = 1-deoxy-D-xylulose 5-phosphate + NADPH + H(+). The protein operates within isoprenoid biosynthesis; isopentenyl diphosphate biosynthesis via DXP pathway; isopentenyl diphosphate from 1-deoxy-D-xylulose 5-phosphate: step 1/6. Its function is as follows. Catalyzes the NADPH-dependent rearrangement and reduction of 1-deoxy-D-xylulose-5-phosphate (DXP) to 2-C-methyl-D-erythritol 4-phosphate (MEP). In Geobacter sp. (strain M21), this protein is 1-deoxy-D-xylulose 5-phosphate reductoisomerase.